The following is a 302-amino-acid chain: Quinolinate synthase (302 aa).

Residues H25 and S42 each contribute to the iminosuccinate site. C87 is a [4Fe-4S] cluster binding site. Iminosuccinate contacts are provided by residues 113-115 (YVN) and S130. Residue C172 coordinates [4Fe-4S] cluster. Residues 198–200 (HPE) and T215 each bind iminosuccinate. C260 is a [4Fe-4S] cluster binding site.

Belongs to the quinolinate synthase family. Type 2 subfamily. The cofactor is [4Fe-4S] cluster.

It localises to the cytoplasm. The catalysed reaction is iminosuccinate + dihydroxyacetone phosphate = quinolinate + phosphate + 2 H2O + H(+). Its pathway is cofactor biosynthesis; NAD(+) biosynthesis; quinolinate from iminoaspartate: step 1/1. Its function is as follows. Catalyzes the condensation of iminoaspartate with dihydroxyacetone phosphate to form quinolinate. This Methanoregula boonei (strain DSM 21154 / JCM 14090 / 6A8) protein is Quinolinate synthase.